The primary structure comprises 1221 residues: DNA-directed RNA polymerase subunit beta' (1221 aa).

Cys-60, Cys-62, Cys-75, and Cys-78 together coordinate Zn(2+). The Mg(2+) site is built by Asp-449, Asp-451, and Asp-453. Zn(2+) is bound by residues Cys-821, Cys-896, Cys-903, and Cys-906.

It belongs to the RNA polymerase beta' chain family. As to quaternary structure, the RNAP catalytic core consists of 2 alpha, 1 beta, 1 beta' and 1 omega subunit. When a sigma factor is associated with the core the holoenzyme is formed, which can initiate transcription. It depends on Mg(2+) as a cofactor. Zn(2+) is required as a cofactor.

The enzyme catalyses RNA(n) + a ribonucleoside 5'-triphosphate = RNA(n+1) + diphosphate. Functionally, DNA-dependent RNA polymerase catalyzes the transcription of DNA into RNA using the four ribonucleoside triphosphates as substrates. This Lactobacillus delbrueckii subsp. bulgaricus (strain ATCC BAA-365 / Lb-18) protein is DNA-directed RNA polymerase subunit beta'.